We begin with the raw amino-acid sequence, 119 residues long: MARIKGGLATHKRHKKVLALTKGHASTRHSLFKRAHESMVHAMSYAFAHRRARKGDMRRLWITRINAAARAEGLTYGELISGLKVAGIDINRKVLADMAISDTVAFAAVAAKAAAAKAN.

Belongs to the bacterial ribosomal protein bL20 family.

In terms of biological role, binds directly to 23S ribosomal RNA and is necessary for the in vitro assembly process of the 50S ribosomal subunit. It is not involved in the protein synthesizing functions of that subunit. The chain is Large ribosomal subunit protein bL20 from Dehalococcoides mccartyi (strain ATCC BAA-2100 / JCM 16839 / KCTC 5957 / BAV1).